Here is a 179-residue protein sequence, read N- to C-terminus: ATP synthase subunit b (179 aa).

Residues 13-33 (IHIDELVFGLIAFAVIFALVY) traverse the membrane as a helical segment.

It belongs to the ATPase B chain family. As to quaternary structure, F-type ATPases have 2 components, F(1) - the catalytic core - and F(0) - the membrane proton channel. F(1) has five subunits: alpha(3), beta(3), gamma(1), delta(1), epsilon(1). F(0) has three main subunits: a(1), b(2) and c(10-14). The alpha and beta chains form an alternating ring which encloses part of the gamma chain. F(1) is attached to F(0) by a central stalk formed by the gamma and epsilon chains, while a peripheral stalk is formed by the delta and b chains.

Its subcellular location is the cell membrane. Its function is as follows. F(1)F(0) ATP synthase produces ATP from ADP in the presence of a proton or sodium gradient. F-type ATPases consist of two structural domains, F(1) containing the extramembraneous catalytic core and F(0) containing the membrane proton channel, linked together by a central stalk and a peripheral stalk. During catalysis, ATP synthesis in the catalytic domain of F(1) is coupled via a rotary mechanism of the central stalk subunits to proton translocation. Functionally, component of the F(0) channel, it forms part of the peripheral stalk, linking F(1) to F(0). This Thermobifida fusca (strain YX) protein is ATP synthase subunit b.